A 162-amino-acid chain; its full sequence is Caveolin-2 (162 aa).

Residues 1–86 are Cytoplasmic-facing; it reads MGLETEKADV…FEISKYVIYK (86 aa). Residue Tyr-19 is modified to Phosphotyrosine; by SRC. Phosphoserine occurs at positions 20 and 23. Tyr-27 is subject to Phosphotyrosine; by SRC. Ser-36 bears the Phosphoserine mark. The helical intramembrane region spans 87 to 107; the sequence is FLTVFLAIPLAFIAGILFATL. The Cytoplasmic segment spans residues 108–162; sequence SCLHIWILMPFVKTCLMVLPSVQTIWKSVTDVVIGPLCTSVGRIFSSVSMQLSHD.

This sequence belongs to the caveolin family. As to quaternary structure, monomer or homodimer. Interacts with CAV1; the interaction forms a stable heterooligomeric complex that is required for targeting to lipid rafts and for caveolae formation. Tyrosine phosphorylated forms do not form heterooligomers with the Tyr-19-phosphorylated form existing as a monomer or dimer and the Tyr-27-form as a monomer only. Interacts (tyrosine phosphorylated form) with the SH2 domain-containing proteins, RASA1, NCK1 and SRC. Interacts (tyrosine phosphorylated form) with INSR; the interaction (Tyr-27-phosphorylated form) is increased on insulin stimulation. Interacts (Tyr-19-phosphorylated form) with MAPK1 (phosphorylated form); the interaction, promoted by insulin, leads to nuclear location and MAPK1 activation. Interacts with STAT3; the interaction is increased on insulin-induced tyrosine phosphorylation leading to STAT activation. Post-translationally, phosphorylated on serine and tyrosine residues. CAV1 promotes phosphorylation on Ser-23 which targets the complex to the plasma membrane, lipid rafts and caveolae. Phosphorylation on Ser-36 appears to modulate mitosis in endothelial cells. Phosphorylation on both Tyr-19 and Tyr-27 is required for insulin-induced 'Ser-727' phosphorylation of STAT3 and its activation. Phosphorylation on Tyr-19 is required for insulin-induced phosphorylation of MAPK1 and DNA binding of STAT3. Tyrosine phosphorylation is induced by both EGF and insulin. In the retina, mainly expressed in vessels, but also diffuse expression in the inner and outer plexiform layers and in the inner nuclear layer.

Its subcellular location is the nucleus. The protein resides in the cytoplasm. The protein localises to the golgi apparatus membrane. It localises to the cell membrane. It is found in the membrane. Its subcellular location is the caveola. In terms of biological role, may act as a scaffolding protein within caveolar membranes. Interacts directly with G-protein alpha subunits and can functionally regulate their activity. Acts as an accessory protein in conjunction with CAV1 in targeting to lipid rafts and driving caveolae formation. The Ser-36 phosphorylated form has a role in modulating mitosis in endothelial cells. Positive regulator of cellular mitogenesis of the MAPK signaling pathway. Required for the insulin-stimulated nuclear translocation and activation of MAPK1 and STAT3, and the subsequent regulation of cell cycle progression. In Rattus norvegicus (Rat), this protein is Caveolin-2 (Cav2).